We begin with the raw amino-acid sequence, 373 residues long: Nuclear migration protein JNM1 (373 aa).

Positions E33–L53 are disordered. Phosphoserine is present on S91. Coiled-coil stretches lie at residues K114–E139, E200–N245, and W331–A367.

As to quaternary structure, component of the dynactin complex composed of at least ARP1, JNM1, NIP100 and ARP10. Dynactin comprises a short rod of ARP1 polymers attached to ARP10 at its pointed-end and probably associated with the capping protein at its barbed-end. The rod structure is implicated in dynein cargo binding. A sidearm formed by NIP100 projects from the ARP1 filament and is implicated in motor binding. Interacts with ARP1.

The protein localises to the cytoplasm. It is found in the cytoskeleton. In terms of biological role, component of the dynactin complex which assists cytoplasmic dynein by increasing its processivity and by regulation of its cargo binding. The dynactin complex is required for the spindle translocation late in anaphase and is involved in a cell wall synthesis checkpoint. JNM1 is associated with the rod and links it to the projecting sidearm. Required for proper nuclear migration during the mitotic cell cycle and for astral microtubule development. This is Nuclear migration protein JNM1 (JNM1) from Saccharomyces cerevisiae (strain ATCC 204508 / S288c) (Baker's yeast).